The primary structure comprises 457 residues: Siroheme synthase (457 aa).

Residues M1–T204 form a precorrin-2 dehydrogenase /sirohydrochlorin ferrochelatase region. Residues D22–V23 and L43–T44 contribute to the NAD(+) site. S128 carries the post-translational modification Phosphoserine. Residues G216–Y457 are uroporphyrinogen-III C-methyltransferase. P225 contacts S-adenosyl-L-methionine. The active-site Proton acceptor is the D248. K270 acts as the Proton donor in catalysis. S-adenosyl-L-methionine-binding positions include G301–D303, I306, T331–A332, M382, and G411.

The protein in the N-terminal section; belongs to the precorrin-2 dehydrogenase / sirohydrochlorin ferrochelatase family. In the C-terminal section; belongs to the precorrin methyltransferase family.

It catalyses the reaction uroporphyrinogen III + 2 S-adenosyl-L-methionine = precorrin-2 + 2 S-adenosyl-L-homocysteine + H(+). It carries out the reaction precorrin-2 + NAD(+) = sirohydrochlorin + NADH + 2 H(+). The enzyme catalyses siroheme + 2 H(+) = sirohydrochlorin + Fe(2+). The protein operates within cofactor biosynthesis; adenosylcobalamin biosynthesis; precorrin-2 from uroporphyrinogen III: step 1/1. It participates in cofactor biosynthesis; adenosylcobalamin biosynthesis; sirohydrochlorin from precorrin-2: step 1/1. Its pathway is porphyrin-containing compound metabolism; siroheme biosynthesis; precorrin-2 from uroporphyrinogen III: step 1/1. It functions in the pathway porphyrin-containing compound metabolism; siroheme biosynthesis; siroheme from sirohydrochlorin: step 1/1. The protein operates within porphyrin-containing compound metabolism; siroheme biosynthesis; sirohydrochlorin from precorrin-2: step 1/1. Functionally, multifunctional enzyme that catalyzes the SAM-dependent methylations of uroporphyrinogen III at position C-2 and C-7 to form precorrin-2 via precorrin-1. Then it catalyzes the NAD-dependent ring dehydrogenation of precorrin-2 to yield sirohydrochlorin. Finally, it catalyzes the ferrochelation of sirohydrochlorin to yield siroheme. This is Siroheme synthase from Salmonella dublin (strain CT_02021853).